We begin with the raw amino-acid sequence, 785 residues long: MNDKILKILEFGEITKRLSKLAITAPAKEAALKLRPSSNFDQVQNELKQTLALADLLRVKGRLPLTDFQDVHPSTKRLGVKANLNAQELGNLLLVLSLANEINKFLEDVDDEKLNLSAIDSVLDQLDVPDLLFRELKKSVDYDGEVLDTASNALARLRHDMRSNEEDIKNRMDAYTKGNSSKYLSEQIVTIRDDRYVIPVKQEYRGKFGGVVHDQSASGQTLFIEPEAVLNLNNRQQNLIAQEKQEIRNILKHLSSLAREEINSINNIANSLTRLDFLQAKAKLAKEMKASEPKLTQDHSLELRNARHPLIDPEKVVPNDIRLGGDYDTMLITGPNTGGKTITLKTAGLLQLMAQSGLFIPAEEGSKVGVFKEVYADIGDEQSIEQSLSTFSSHINDIIAIMKNVDKETLVLIDEIGAGTDPEEGASLAISILDFLRKKDAKIMVTTHYPELKLYGYNRPRTINASMEFDLKTLSPTYHLQIGIPGHSNAFAIARRLGMREDVVKNAQNLMADEDSDINKMIAKLNAQTKAATTARNRLETSLDRSQKLEQKLQQALDWYNQRVQKQLDFAQERANEVVAKRRKKADKIIAELEKQKNVGVKENKIIEAKGELNSLERQAHNLAHNKVLQREKRQHHVSVGDQVKVLSYGQTGTITKKLSEHEYEVQIGIIKVKVSDRDIERIAKNNAQPKKKLVRATSAIRRSNAHSELDLRGQRYDEAMTNLDRYIDSALLAGLDIVTIIHGIGTGAIRKGVWQYLRSSNHVKGFNYAPANEGGNGATIVKLK.

334-341 is an ATP binding site; that stretch reads GPNTGGKT. A Smr domain is found at 710–785; it reads LDLRGQRYDE…GNGATIVKLK (76 aa).

It belongs to the DNA mismatch repair MutS family. MutS2 subfamily. In terms of assembly, homodimer. Binds to stalled ribosomes, contacting rRNA.

Its function is as follows. Endonuclease that is involved in the suppression of homologous recombination and thus may have a key role in the control of bacterial genetic diversity. In terms of biological role, acts as a ribosome collision sensor, splitting the ribosome into its 2 subunits. Detects stalled/collided 70S ribosomes which it binds and splits by an ATP-hydrolysis driven conformational change. Acts upstream of the ribosome quality control system (RQC), a ribosome-associated complex that mediates the extraction of incompletely synthesized nascent chains from stalled ribosomes and their subsequent degradation. Probably generates substrates for RQC. This is Endonuclease MutS2 from Lactobacillus helveticus (strain DPC 4571).